Here is a 296-residue protein sequence, read N- to C-terminus: Homeobox protein SIX2 (296 aa).

A DNA-binding region (homeobox) is located at residues 124–183 (GEETSYCFKEKSRSVLREWYAHNPYPSPREKRELAEATGLTTTQVSNWFKNRRQRDRAAE). The segment at 168–284 (VSNWFKNRRQ…HHHSLQDSIL (117 aa)) is disordered. Over residues 179-190 (DRAAEAKERENS) the composition is skewed to basic and acidic residues. 2 stretches are compositionally biased toward low complexity: residues 191–206 (ENSN…SSLN) and 228–237 (HSSSSPALLL). Residues 254-264 (PPGPSAVPVPV) show a composition bias toward pro residues.

The protein belongs to the SIX/Sine oculis homeobox family. As to quaternary structure, interacts with TCF7L2; in a canonical Wnt signaling independent manner; prevents transcription of differentiation genes in cap mesenchyme. Interacts with OSR1; form a strong repressor complex with TCF7L2, TLE2 and TLE3 to prevent the activation of Wnt/beta-catenin target genes in the cap mesenchyme. Interacts with HOXA11, EYA1 and EYA3. As to expression, expressed in phalangeal tendons, in smooth muscle and in head and body mesenchyme.

It is found in the nucleus. Functionally, transcription factor that plays an important role in the development of several organs, including kidney, skull and stomach. During kidney development, maintains cap mesenchyme multipotent nephron progenitor cells in an undifferentiated state by opposing the inductive signals emanating from the ureteric bud and cooperates with WNT9B to promote renewing progenitor cells proliferation. Acts through its interaction with TCF7L2 and OSR1 in a canonical Wnt signaling independent manner preventing transcription of differentiation genes in cap mesenchyme such as WNT4. Also acts independently of OSR1 to activate expression of many cap mesenchyme genes, including itself, GDNF and OSR1. During craniofacial development plays a role in growth and elongation of the cranial base through regulation of chondrocyte differentiation. During stomach organogenesis, controls pyloric sphincter formation and mucosal growth through regulation of a gene network including NKX2-5, BMPR1B, BMP4, SOX9 and GREM1. During branchial arch development, acts to mediate HOXA2 control over the insulin-like growth factor pathway. May also be involved in limb tendon and ligament development. Plays a role in cell proliferation and migration. This is Homeobox protein SIX2 (Six2) from Mus musculus (Mouse).